A 552-amino-acid polypeptide reads, in one-letter code: C-type lectin receptor-like tyrosine-protein kinase At1g52310 (552 aa).

Residues 1–27 (MELKWVSCRKQSLFLISCLALLCLASL) form the signal peptide. Residues 28–201 (DTISCESTQN…DIKCRNCHKY (174 aa)) are Extracellular-facing. N-linked (GlcNAc...) asparagine glycans are attached at residues asparagine 37, asparagine 59, asparagine 69, asparagine 106, asparagine 118, asparagine 137, asparagine 154, asparagine 169, and asparagine 180. A C-type lectin domain is found at 59–188 (NQTKCYAYFK…CNASHAFVCA (130 aa)). Cystine bridges form between cysteine 80–cysteine 187 and cysteine 164–cysteine 179. The chain crosses the membrane as a helical span at residues 202 to 222 (LVILAVVSGLILFTTFAIILW). Residues 223–552 (LLVYKRSKKR…QQLVQPLEVK (330 aa)) lie on the Cytoplasmic side of the membrane. The region spanning 268–546 (SEANRLAGDA…HVVHQLQQLV (279 aa)) is the Protein kinase domain. ATP-binding positions include 274–282 (AGDAKTGGT) and lysine 296. Aspartate 394 functions as the Proton acceptor in the catalytic mechanism.

Belongs to the protein kinase superfamily. Tyr protein kinase family.

Its subcellular location is the cell membrane. It catalyses the reaction L-tyrosyl-[protein] + ATP = O-phospho-L-tyrosyl-[protein] + ADP + H(+). The protein is C-type lectin receptor-like tyrosine-protein kinase At1g52310 of Arabidopsis thaliana (Mouse-ear cress).